The chain runs to 359 residues: 3-dehydroquinate synthase (359 aa).

Residues 71–76, 105–109, 129–130, Lys-142, Lys-151, and 169–172 contribute to the NAD(+) site; these read DGEQFK, GVIGD, TT, and CLQT. Zn(2+) is bound by residues Glu-184, His-247, and His-264.

It belongs to the sugar phosphate cyclases superfamily. Dehydroquinate synthase family. Requires Co(2+) as cofactor. The cofactor is Zn(2+). NAD(+) serves as cofactor.

The protein localises to the cytoplasm. It catalyses the reaction 7-phospho-2-dehydro-3-deoxy-D-arabino-heptonate = 3-dehydroquinate + phosphate. Its pathway is metabolic intermediate biosynthesis; chorismate biosynthesis; chorismate from D-erythrose 4-phosphate and phosphoenolpyruvate: step 2/7. Catalyzes the conversion of 3-deoxy-D-arabino-heptulosonate 7-phosphate (DAHP) to dehydroquinate (DHQ). The protein is 3-dehydroquinate synthase of Shewanella sp. (strain ANA-3).